We begin with the raw amino-acid sequence, 446 residues long: Light-independent protochlorophyllide reductase subunit N (446 aa).

[4Fe-4S] cluster-binding residues include Cys-22, Cys-47, and Cys-107.

This sequence belongs to the BchN/ChlN family. Protochlorophyllide reductase is composed of three subunits; ChlL, ChlN and ChlB. Forms a heterotetramer of two ChlB and two ChlN subunits. The cofactor is [4Fe-4S] cluster.

The protein resides in the plastid. It is found in the chloroplast. It carries out the reaction chlorophyllide a + oxidized 2[4Fe-4S]-[ferredoxin] + 2 ADP + 2 phosphate = protochlorophyllide a + reduced 2[4Fe-4S]-[ferredoxin] + 2 ATP + 2 H2O. The protein operates within porphyrin-containing compound metabolism; chlorophyll biosynthesis (light-independent). Component of the dark-operative protochlorophyllide reductase (DPOR) that uses Mg-ATP and reduced ferredoxin to reduce ring D of protochlorophyllide (Pchlide) to form chlorophyllide a (Chlide). This reaction is light-independent. The NB-protein (ChlN-ChlB) is the catalytic component of the complex. The sequence is that of Light-independent protochlorophyllide reductase subunit N from Mesostigma viride (Green alga).